Reading from the N-terminus, the 136-residue chain is Protein LITTLE ZIPPER 1 (136 aa).

A coiled-coil region spans residues 97–122; the sequence is ENQNIIRENEKLKKKALLLHQENKTL.

In terms of assembly, interacts with REV. As to expression, expressed in the adaxial epidermis of the cotyledons and in the vascular cylinder of wild-type torpedo stage embryos.

In terms of biological role, competitive inhibitor of the HD-ZIPIII transcription factors in shoot apical meristem (SAM) development. Acts by forming non-functional heterodimers. Part of a negative feedback loop. Essential for proper functioning of stem cells in the SAM. The sequence is that of Protein LITTLE ZIPPER 1 from Arabidopsis thaliana (Mouse-ear cress).